The primary structure comprises 264 residues: Pimeloyl-[acyl-carrier protein] methyl ester esterase (264 aa).

Residues 23-244 enclose the AB hydrolase-1 domain; it reads LVMLHGWGVN…MLAKASHAPF (222 aa). Substrate-binding positions include W29, 87-88, and 150-154; these read SL and FLAIQ. The active-site Nucleophile is S87. Active-site residues include D214 and H241. H241 contributes to the substrate binding site.

This sequence belongs to the AB hydrolase superfamily. Carboxylesterase BioH family. As to quaternary structure, monomer.

It is found in the cytoplasm. The catalysed reaction is 6-carboxyhexanoyl-[ACP] methyl ester + H2O = 6-carboxyhexanoyl-[ACP] + methanol + H(+). It participates in cofactor biosynthesis; biotin biosynthesis. The physiological role of BioH is to remove the methyl group introduced by BioC when the pimeloyl moiety is complete. It allows to synthesize pimeloyl-ACP via the fatty acid synthetic pathway through the hydrolysis of the ester bonds of pimeloyl-ACP esters. The sequence is that of Pimeloyl-[acyl-carrier protein] methyl ester esterase from Shewanella sp. (strain MR-7).